The following is a 689-amino-acid chain: DNA ligase (689 aa).

Residues 40–44 (DSEYD), 89–90 (SL), and Glu121 contribute to the NAD(+) site. Catalysis depends on Lys123, which acts as the N6-AMP-lysine intermediate. Positions 144, 179, 295, and 319 each coordinate NAD(+). The Zn(2+) site is built by Cys413, Cys416, Cys431, and Cys437. Residues 610–689 (REQSGLTDKI…EEWLTLIKNV (80 aa)) form the BRCT domain.

Belongs to the NAD-dependent DNA ligase family. LigA subfamily. The cofactor is Mg(2+). It depends on Mn(2+) as a cofactor.

The catalysed reaction is NAD(+) + (deoxyribonucleotide)n-3'-hydroxyl + 5'-phospho-(deoxyribonucleotide)m = (deoxyribonucleotide)n+m + AMP + beta-nicotinamide D-nucleotide.. Functionally, DNA ligase that catalyzes the formation of phosphodiester linkages between 5'-phosphoryl and 3'-hydroxyl groups in double-stranded DNA using NAD as a coenzyme and as the energy source for the reaction. It is essential for DNA replication and repair of damaged DNA. The sequence is that of DNA ligase from Rickettsia conorii (strain ATCC VR-613 / Malish 7).